The following is a 218-amino-acid chain: Protein-methionine-sulfoxide reductase heme-binding subunit MsrQ (218 aa).

The next 5 helical transmembrane spans lie at 14-34, 60-80, 86-106, 121-141, and 155-175; these read LVHA…WQVW, LLLI…AVVI, LGLY…TLDL, PYIT…ITST, and LHML…WLVK.

Belongs to the MsrQ family. Heterodimer of a catalytic subunit (MsrP) and a heme-binding subunit (MsrQ). It depends on FMN as a cofactor. Requires heme b as cofactor.

It is found in the cell inner membrane. Functionally, part of the MsrPQ system that repairs oxidized periplasmic proteins containing methionine sulfoxide residues (Met-O), using respiratory chain electrons. Thus protects these proteins from oxidative-stress damage caused by reactive species of oxygen and chlorine generated by the host defense mechanisms. MsrPQ is essential for the maintenance of envelope integrity under bleach stress, rescuing a wide series of structurally unrelated periplasmic proteins from methionine oxidation. MsrQ provides electrons for reduction to the reductase catalytic subunit MsrP, using the quinone pool of the respiratory chain. In Xanthomonas axonopodis pv. citri (strain 306), this protein is Protein-methionine-sulfoxide reductase heme-binding subunit MsrQ.